The chain runs to 394 residues: NAD(P)H-quinone oxidoreductase subunit H (394 aa).

The protein belongs to the complex I 49 kDa subunit family. As to quaternary structure, NDH-1 can be composed of about 15 different subunits; different subcomplexes with different compositions have been identified which probably have different functions.

The protein localises to the cellular thylakoid membrane. The catalysed reaction is a plastoquinone + NADH + (n+1) H(+)(in) = a plastoquinol + NAD(+) + n H(+)(out). It carries out the reaction a plastoquinone + NADPH + (n+1) H(+)(in) = a plastoquinol + NADP(+) + n H(+)(out). In terms of biological role, NDH-1 shuttles electrons from an unknown electron donor, via FMN and iron-sulfur (Fe-S) centers, to quinones in the respiratory and/or the photosynthetic chain. The immediate electron acceptor for the enzyme in this species is believed to be plastoquinone. Couples the redox reaction to proton translocation, and thus conserves the redox energy in a proton gradient. Cyanobacterial NDH-1 also plays a role in inorganic carbon-concentration. This chain is NAD(P)H-quinone oxidoreductase subunit H, found in Synechococcus sp. (strain CC9902).